The sequence spans 369 residues: Trichocyst matrix protein T1-B (369 aa).

A signal peptide spans 1-16 (MYKLAVCTLLILSVTA). Positions 17 to 55 (IDVTNSVWTSHDQKAFAQIKQSGWGNFILNFGELHLQTG) are excised as a propeptide. Residues 56 to 180 (GILAELNTEI…AIDESLQLLS (125 aa)) adopt a coiled-coil conformation. A propeptide spanning residues 190 to 225 (IQKVQKNLTKIQQSLKRHSTFQTFIKTLLEIAVEAN) is cleaved from the precursor. Residues 262-354 (KDFEARVIQL…AHQALDLLNQ (93 aa)) adopt a coiled-coil conformation.

The protein belongs to the TMP family. In terms of processing, two components are produced by post-translational processing from the precursor peptide.

It localises to the trichocyst. Functionally, structural protein that crystallize inside the trichocyst matrix. This Paramecium tetraurelia protein is Trichocyst matrix protein T1-B (T1B).